Here is a 136-residue protein sequence, read N- to C-terminus: Glutaredoxin-C7 (136 aa).

Residues 29–135 form the Glutaredoxin domain; it reads LLRIESLASE…PLLKDAGALW (107 aa). The cysteines at positions 49 and 52 are disulfide-linked. A Responsive for interaction with TGA factors motif is present at residues 133–136; the sequence is ALWL.

The protein belongs to the glutaredoxin family. CC-type subfamily. Interacts with TGA2, TGA3, TGA7 and PAN. Interacts with TGA9 and TGA10 in the nucleus. In terms of tissue distribution, highly expressed in inflorescences, roots, and siliques. Expressed at lower levels in mature flowers.

The protein resides in the cytoplasm. It localises to the nucleus. Functionally, has a glutathione-disulfide oxidoreductase activity in the presence of NADPH and glutathione reductase. Reduces low molecular weight disulfides and proteins. Involved in flower development as a regulator of petal primorida initiation and further petal morphogenesis. May mediate post-translational modifications of target proteins required for normal petal organ initiation and morphogenesis. ROXY1/TGA protein interactions can occur in vivo and support their biological relevance in petal development. May be involved in the regulation of the floral regulator class C gene AG (AGAMOUS). This is Glutaredoxin-C7 (GRXC7) from Arabidopsis thaliana (Mouse-ear cress).